Reading from the N-terminus, the 262-residue chain is Acyl-[acyl-carrier-protein]--UDP-N-acetylglucosamine O-acyltransferase (262 aa).

The protein belongs to the transferase hexapeptide repeat family. LpxA subfamily. As to quaternary structure, homotrimer.

The protein localises to the cytoplasm. It catalyses the reaction a (3R)-hydroxyacyl-[ACP] + UDP-N-acetyl-alpha-D-glucosamine = a UDP-3-O-[(3R)-3-hydroxyacyl]-N-acetyl-alpha-D-glucosamine + holo-[ACP]. It functions in the pathway glycolipid biosynthesis; lipid IV(A) biosynthesis; lipid IV(A) from (3R)-3-hydroxytetradecanoyl-[acyl-carrier-protein] and UDP-N-acetyl-alpha-D-glucosamine: step 1/6. Its function is as follows. Involved in the biosynthesis of lipid A, a phosphorylated glycolipid that anchors the lipopolysaccharide to the outer membrane of the cell. The chain is Acyl-[acyl-carrier-protein]--UDP-N-acetylglucosamine O-acyltransferase from Vibrio campbellii (strain ATCC BAA-1116).